A 214-amino-acid polypeptide reads, in one-letter code: Probable GTP-binding protein EngB (214 aa).

Residues 30–204 (EGFEVAFAGR…YTVLAGWMEL (175 aa)) enclose the EngB-type G domain. GTP-binding positions include 38–45 (GRSNAGKS), 64–68 (GRTQL), 82–85 (DLPG), 149–152 (TKAD), and 182–185 (LFSA). Positions 45 and 66 each coordinate Mg(2+).

This sequence belongs to the TRAFAC class TrmE-Era-EngA-EngB-Septin-like GTPase superfamily. EngB GTPase family. Mg(2+) serves as cofactor.

Functionally, necessary for normal cell division and for the maintenance of normal septation. The sequence is that of Probable GTP-binding protein EngB from Pseudomonas fluorescens (strain Pf0-1).